The primary structure comprises 300 residues: tRNA pseudouridine synthase B (300 aa).

Catalysis depends on Asp38, which acts as the Nucleophile.

The protein belongs to the pseudouridine synthase TruB family. Type 1 subfamily.

It carries out the reaction uridine(55) in tRNA = pseudouridine(55) in tRNA. Functionally, responsible for synthesis of pseudouridine from uracil-55 in the psi GC loop of transfer RNAs. This is tRNA pseudouridine synthase B from Anaplasma phagocytophilum (strain HZ).